The primary structure comprises 237 residues: MLEEDMEVAIKMVVVGNGAVGKSSMIQRYCKGIFTKDYKKTIGVDFLERQIQVNDEDVRLMLWDTAGQEEFDAITKAYYRGAQACVLVFSTTDRESFEAVSSWREKVVAEVGDIPTVLVQNKIDLLDDSCIKNEEAEALAKRLKLRFYRTSVKEDLNVNEVFKYLAEKYLQKLKQQIAEDPELTHSSSNKIGVFNTSGGSHSGQNSGTLNGGDVINLRPNKQRTKKNRNPFSSCSIP.

The GTP site is built by valine 20, glycine 21, lysine 22, serine 23, serine 24, tyrosine 38, and threonine 41. Serine 23 contributes to the Mg(2+) binding site. Positions 28–46 (RYCKGIFTKDYKKTIGVDF) match the Switch 1 motif. Positions 41 and 64 each coordinate Mg(2+). Positions 65 to 84 (TAGQEEFDAITKAYYRGAQA) match the Switch 2 motif. The GTP site is built by glycine 67, asparagine 121, lysine 122, aspartate 124, serine 151, valine 152, and lysine 153. Phosphoserine is present on residues serine 186 and serine 187. Residues 188 to 208 (SNKIGVFNTSGGSHSGQNSGT) show a composition bias toward polar residues. A disordered region spans residues 188-237 (SNKIGVFNTSGGSHSGQNSGTLNGGDVINLRPNKQRTKKNRNPFSSCSIP). Cysteine 234 bears the Cysteine methyl ester mark. Cysteine 234 carries the S-geranylgeranyl cysteine lipid modification. Residues 235 to 237 (SIP) constitute a propeptide, removed in mature form.

Belongs to the small GTPase superfamily. Rab family. As to quaternary structure, interacts with SUFU. Mg(2+) is required as a cofactor.

It is found in the cell membrane. The protein localises to the cytoplasm. Its subcellular location is the cytoplasmic vesicle. It localises to the autophagosome. The protein resides in the endosome membrane. It is found in the phagosome. The protein localises to the phagosome membrane. It catalyses the reaction GTP + H2O = GDP + phosphate + H(+). Its activity is regulated as follows. Regulated by guanine nucleotide exchange factors (GEFs) which promote the exchange of bound GDP for free GTP. Regulated by GTPase activating proteins (GAPs) which increase the GTP hydrolysis activity. Inhibited by GDP dissociation inhibitors (GDIs). Functionally, the small GTPases Rab are key regulators of intracellular membrane trafficking, from the formation of transport vesicles to their fusion with membranes. Rabs cycle between an inactive GDP-bound form and an active GTP-bound form that is able to recruit to membranes different set of downstream effectors directly responsible for vesicle formation, movement, tethering and fusion. Together with SUFU, prevents nuclear import of GLI1, and thereby inhibits GLI1 transcription factor activity. Regulates GLI1 in differentiating chondrocytes. Likewise, regulates GLI3 proteolytic processing and modulates GLI2 and GLI3 transcription factor activity. Plays a role in autophagic vacuole assembly, and mediates defense against pathogens, such as S.aureus, by promoting their capture by autophagosomes that then merge with lysosomes. This chain is Ras-related protein Rab-23, found in Homo sapiens (Human).